Reading from the N-terminus, the 96-residue chain is RNA-binding protein Hfq (96 aa).

The Sm domain maps to 9–68; sequence DPYLNALRRERIPVSIYLVNGIKLQGQIESFDQFVILLKNTVNQMVYKHAISTVVPARSV. The disordered stretch occupies residues 67–96; that stretch reads SVSHHNNSNNSNQQNYQQEQQTDSNVEKAE. Low complexity predominate over residues 72 to 87; the sequence is NNSNNSNQQNYQQEQQ.

This sequence belongs to the Hfq family. Homohexamer.

RNA chaperone that binds small regulatory RNA (sRNAs) and mRNAs to facilitate mRNA translational regulation in response to envelope stress, environmental stress and changes in metabolite concentrations. Also binds with high specificity to tRNAs. This Pasteurella multocida (strain Pm70) protein is RNA-binding protein Hfq.